A 92-amino-acid chain; its full sequence is U21-hexatoxin-Hi1a (92 aa).

Residues Met1–Gly19 form the signal peptide. Intrachain disulfides connect Cys41/Cys55, Cys48/Cys67, Cys54/Cys82, and Cys85/Cys92.

The protein belongs to the neurotoxin 21 family. As to expression, expressed by the venom gland.

Its subcellular location is the secreted. In terms of biological role, potent insecticidal toxin with probable ion channel impairing activity. In vivo, reversibly paralyzes all flies within 30 minutes, even at low dose (0.3 nmol/g). The sequence is that of U21-hexatoxin-Hi1a from Hadronyche infensa (Fraser island funnel-web spider).